The chain runs to 582 residues: UPF0329 protein ECU07_0070 (582 aa).

The disordered stretch occupies residues E326–Q386. Positions K330–S339 are enriched in basic residues. Over residues E344–G354 the composition is skewed to basic and acidic residues.

The protein belongs to the UPF0329 family.

The polypeptide is UPF0329 protein ECU07_0070 (Encephalitozoon cuniculi (strain GB-M1) (Microsporidian parasite)).